A 1190-amino-acid chain; its full sequence is Plakophilin-4 (1190 aa).

The interval M1 to T32 is disordered. Residues T36 to A63 adopt a coiled-coil conformation. Residues A73–Q347 form a disordered region. Residue S75 is modified to Phosphoserine. A compositionally biased stretch (polar residues) spans S77–K86. Phosphothreonine is present on T84. Residues S106, S132, S136, and S139 each carry the phosphoserine modification. Polar residues-rich tracts occupy residues G138–G156, F163–V203, and S213–V229. 3 positions are modified to phosphoserine: S220, S230, and S235. Residues S230–G241 show a composition bias toward low complexity. Positions P247 to P266 are enriched in polar residues. R253 and R269 each carry omega-N-methylarginine. 5 positions are modified to phosphoserine: S272, S280, S313, S326, and S336. The segment covering S289–R323 has biased composition (polar residues). The span at V324–P337 shows a compositional bias: low complexity. Y371 is modified (phosphotyrosine). A phosphoserine mark is found at S391, S402, and S405. T411 is modified (phosphothreonine). A Phosphotyrosine modification is found at Y414. 3 positions are modified to phosphoserine: S421, S426, and S437. Y477 is subject to Phosphotyrosine. A phosphoserine mark is found at S509, S511, and S514. 3 ARM repeats span residues K517 to F556, N559 to F598, and D603 to S643. Over residues G772 to E781 the composition is skewed to basic and acidic residues. The segment at G772 to G809 is disordered. Residue S775 is modified to Phosphoserine. Residues A861–L900 form an ARM 4 repeat. 2 positions are modified to phosphothreonine: T1012 and T1016. Residues S1044, S1090, S1099, and S1133 each carry the phosphoserine modification.

This sequence belongs to the beta-catenin family. In terms of assembly, interacts (via the C-terminus) with FRMPD2 (via the PDZ 2 domain). Interacts with PDZD2. Interacts with RHOA; the interaction is detected at the midbody. Interacts with ECT2; the interaction is detected at the midbody. Interacts with CCDC85B.

Its subcellular location is the cell junction. It localises to the desmosome. The protein localises to the cytoplasm. The protein resides in the cytoskeleton. It is found in the spindle. Its subcellular location is the spindle pole. It localises to the midbody. The protein localises to the cell membrane. Its function is as follows. Plays a role as a regulator of Rho activity during cytokinesis. May play a role in junctional plaques. This chain is Plakophilin-4 (Pkp4), found in Mus musculus (Mouse).